The following is a 165-amino-acid chain: UPF0114 protein ESA_00283 (165 aa).

A run of 3 helical transmembrane segments spans residues 15 to 35 (LLAP…VKFF), 53 to 73 (LILL…LVMV), and 136 to 156 (LMWY…MGYL).

This sequence belongs to the UPF0114 family.

It localises to the cell membrane. The chain is UPF0114 protein ESA_00283 from Cronobacter sakazakii (strain ATCC BAA-894) (Enterobacter sakazakii).